Reading from the N-terminus, the 346-residue chain is NADH-quinone oxidoreductase subunit H 2 (346 aa).

8 consecutive transmembrane segments (helical) span residues 14 to 34 (IAMV…VAYA), 83 to 103 (FAFL…FAVI), 136 to 156 (VGVL…VLAG), 172 to 192 (SAQM…VFML), 208 to 228 (GAWY…CSIA), 260 to 280 (FFMA…TLFL), 289 to 309 (LPGW…CMWI), and 324 to 344 (LGWK…GIIV).

The protein belongs to the complex I subunit 1 family. As to quaternary structure, NDH-1 is composed of 14 different subunits. Subunits NuoA, H, J, K, L, M, N constitute the membrane sector of the complex.

It localises to the cell inner membrane. The catalysed reaction is a quinone + NADH + 5 H(+)(in) = a quinol + NAD(+) + 4 H(+)(out). NDH-1 shuttles electrons from NADH, via FMN and iron-sulfur (Fe-S) centers, to quinones in the respiratory chain. The immediate electron acceptor for the enzyme in this species is believed to be ubiquinone. Couples the redox reaction to proton translocation (for every two electrons transferred, four hydrogen ions are translocated across the cytoplasmic membrane), and thus conserves the redox energy in a proton gradient. This subunit may bind ubiquinone. The sequence is that of NADH-quinone oxidoreductase subunit H 2 from Geobacter metallireducens (strain ATCC 53774 / DSM 7210 / GS-15).